The sequence spans 977 residues: AP-2 complex subunit alpha-1 (977 aa).

A disordered region spans residues 614-702 (AKLKRKKGPG…PSLGPTPEEA (89 aa)). Ser626 and Ser652 each carry phosphoserine. The segment covering 646–657 (PTPSTVSTPSPS) has biased composition (low complexity). Thr653 bears the Phosphothreonine mark. Position 655 is a phosphoserine (Ser655). Over residues 666–675 (APPPAAPPAP) the composition is skewed to pro residues.

This sequence belongs to the adaptor complexes large subunit family. Adaptor protein complex 2 (AP-2) is a heterotetramer composed of two large adaptins (alpha-type subunit AP2A1 or AP2A2 and beta-type subunit AP2B1), a medium adaptin (mu-type subunit AP2M1) and a small adaptin (sigma-type subunit AP2S1). Interacts with HIP1 and RAB11FIP2. Interacts with SLC12A5. Interacts with clathrin. Interacts with SGIP1. Interacts with RFTN1. Interacts with KIAA1107. Interacts with PICALM. Together with AP2B1 and AP2M1, it interacts with ADAM10; this interaction facilitates ADAM10 endocytosis from the plasma membrane during long-term potentiation in hippocampal neurons. Interacts with ABCB11; this interaction regulates cell membrane expression of ABCB11 through its internalization in a clathrin-dependent manner and its subsequent degradation. Probably interacts with ACE2 (via endocytic sorting signal motif); the interaction is inhibited by ACE2 phosphorylation. In terms of tissue distribution, expressed in the brain (at protein level). Isoform A: Expressed only in neuronal tissue and skeletal muscle. Isoform B: Widely expressed.

The protein localises to the cell membrane. The protein resides in the membrane. It is found in the coated pit. Its function is as follows. Component of the adaptor protein complex 2 (AP-2). Adaptor protein complexes function in protein transport via transport vesicles in different membrane traffic pathways. Adaptor protein complexes are vesicle coat components and appear to be involved in cargo selection and vesicle formation. AP-2 is involved in clathrin-dependent endocytosis in which cargo proteins are incorporated into vesicles surrounded by clathrin (clathrin-coated vesicles, CCVs) which are destined for fusion with the early endosome. The clathrin lattice serves as a mechanical scaffold but is itself unable to bind directly to membrane components. Clathrin-associated adaptor protein (AP) complexes which can bind directly to both the clathrin lattice and to the lipid and protein components of membranes are considered to be the major clathrin adaptors contributing the CCV formation. AP-2 also serves as a cargo receptor to selectively sort the membrane proteins involved in receptor-mediated endocytosis. AP-2 seems to play a role in the recycling of synaptic vesicle membranes from the presynaptic surface. AP-2 recognizes Y-X-X-[FILMV] (Y-X-X-Phi) and [ED]-X-X-X-L-[LI] endocytosis signal motifs within the cytosolic tails of transmembrane cargo molecules. AP-2 may also play a role in maintaining normal post-endocytic trafficking through the ARF6-regulated, non-clathrin pathway. The AP-2 alpha subunit binds polyphosphoinositide-containing lipids, positioning AP-2 on the membrane. During long-term potentiation in hippocampal neurons, AP-2 is responsible for the endocytosis of ADAM10. The AP-2 alpha subunit acts via its C-terminal appendage domain as a scaffolding platform for endocytic accessory proteins. The AP-2 alpha and AP-2 sigma subunits are thought to contribute to the recognition of the [ED]-X-X-X-L-[LI] motif. This is AP-2 complex subunit alpha-1 (Ap2a1) from Mus musculus (Mouse).